Consider the following 367-residue polypeptide: NADH-quinone oxidoreductase subunit H (367 aa).

8 helical membrane passes run 19–39 (ALFIKIIAVIISVMISVAYLV), 87–107 (ICFLIAPIITFTLALLGWAVI), 132–152 (IGVLYILAISSLGVYGIIIAG), 178–198 (IGLTIVTVLLATGSLKLGEIV), 204–224 (MPYWIDLLLLPMACIFFISAL), 266–286 (ILINAMAVIFFFGGWYPPLNI), 291–311 (IIPGIVWFVLKVVALLFCFIW), and 328–348 (GWKVFLPISLLWVVLVSSILV).

Belongs to the complex I subunit 1 family. NDH-1 is composed of 14 different subunits. Subunits NuoA, H, J, K, L, M, N constitute the membrane sector of the complex.

The protein localises to the cell inner membrane. It carries out the reaction a quinone + NADH + 5 H(+)(in) = a quinol + NAD(+) + 4 H(+)(out). NDH-1 shuttles electrons from NADH, via FMN and iron-sulfur (Fe-S) centers, to quinones in the respiratory chain. The immediate electron acceptor for the enzyme in this species is believed to be ubiquinone. Couples the redox reaction to proton translocation (for every two electrons transferred, four hydrogen ions are translocated across the cytoplasmic membrane), and thus conserves the redox energy in a proton gradient. This subunit may bind ubiquinone. The polypeptide is NADH-quinone oxidoreductase subunit H (Ehrlichia chaffeensis (strain ATCC CRL-10679 / Arkansas)).